Here is a 406-residue protein sequence, read N- to C-terminus: MNETPKPNSFRSGPDEDGRFGIYGGRFVAETLMPLILDLQDEWNKAKTDPAFQAELQHLGAHYIGRPSPLYFAERLTAELGGAKIYFKREELNHTGSHKINNCIGQILLAKRMGKTRIIAETGAGQHGVASATVAARFGLPCVVYMGATDVERQAPNVFRMKLLGAEVKPVTAGSGTLKDAMNEALRDWVTNVEDTYYLIGTAAGPHPYPEMVRDFQSVIGAEAKEQMLAAEGRLPDLVVAAVGGGSNAIGIFHPFLDDPSVKIVGVEAGGKGLQGDEHCASITAGSPGVLHGNRTYLLQDGDGQIKEGHSISAGLDYPGIGPEHSWLSDIGRVDYVPIMDHEALEAFQTLTRLEGIIPALEAAHAIAEVIKRAPTMSKDEIILMNLSGRGDKDIFTVGKILGMGL.

Residue lysine 99 is modified to N6-(pyridoxal phosphate)lysine.

Belongs to the TrpB family. As to quaternary structure, tetramer of two alpha and two beta chains. It depends on pyridoxal 5'-phosphate as a cofactor.

The catalysed reaction is (1S,2R)-1-C-(indol-3-yl)glycerol 3-phosphate + L-serine = D-glyceraldehyde 3-phosphate + L-tryptophan + H2O. It functions in the pathway amino-acid biosynthesis; L-tryptophan biosynthesis; L-tryptophan from chorismate: step 5/5. Its function is as follows. The beta subunit is responsible for the synthesis of L-tryptophan from indole and L-serine. The polypeptide is Tryptophan synthase beta chain (Rhizobium etli (strain CIAT 652)).